The sequence spans 164 residues: Urease subunit beta (164 aa).

2 stretches are compositionally biased toward polar residues: residues 1–10 (MSTKTNSTKA) and 20–32 (TNRG…GYSE). The segment at 1–32 (MSTKTNSTKATSEKTDSLKTNRGTKSSAGYSE) is disordered.

The protein belongs to the urease beta subunit family. Heterotrimer of UreA (gamma), UreB (beta) and UreC (alpha) subunits. Three heterotrimers associate to form the active enzyme.

It localises to the cytoplasm. The catalysed reaction is urea + 2 H2O + H(+) = hydrogencarbonate + 2 NH4(+). The protein operates within nitrogen metabolism; urea degradation; CO(2) and NH(3) from urea (urease route): step 1/1. This is Urease subunit beta from Yersinia enterocolitica serotype O:8 / biotype 1B (strain NCTC 13174 / 8081).